Reading from the N-terminus, the 532-residue chain is Probable 1,4-beta-D-glucan cellobiohydrolase B (532 aa).

Positions 1–26 (MLASTFSYRMYKTALILAALLGSGQA) are cleaved as a signal peptide. Positions 27–461 (QQVGTSQAEV…SNIKVGPIGS (435 aa)) are catalytic. Glu-238 serves as the catalytic Nucleophile. Residue Glu-243 is the Proton donor of the active site. The N-linked (GlcNAc...) asparagine glycan is linked to Asn-296. The disordered stretch occupies residues 462 to 495 (TFNSGGSNPGGGTTTTTTTQPTTTTTTAGNPGGT). The interval 462-496 (TFNSGGSNPGGGTTTTTTTQPTTTTTTAGNPGGTG) is thr-rich linker. Low complexity predominate over residues 475–490 (TTTTTTQPTTTTTTAG). The 37-residue stretch at 496 to 532 (GVAQHYGQCGGIGWTGPTTCASPYTCQKLNDYYSQCL) folds into the CBM1 domain. 2 disulfides stabilise this stretch: Cys-504–Cys-521 and Cys-515–Cys-531.

This sequence belongs to the glycosyl hydrolase 7 (cellulase C) family.

The protein localises to the secreted. The catalysed reaction is Hydrolysis of (1-&gt;4)-beta-D-glucosidic linkages in cellulose and cellotetraose, releasing cellobiose from the non-reducing ends of the chains.. The biological conversion of cellulose to glucose generally requires three types of hydrolytic enzymes: (1) Endoglucanases which cut internal beta-1,4-glucosidic bonds; (2) Exocellobiohydrolases that cut the disaccharide cellobiose from the non-reducing end of the cellulose polymer chain; (3) Beta-1,4-glucosidases which hydrolyze the cellobiose and other short cello-oligosaccharides to glucose. The chain is Probable 1,4-beta-D-glucan cellobiohydrolase B (cbhB) from Aspergillus fumigatus (strain CBS 144.89 / FGSC A1163 / CEA10) (Neosartorya fumigata).